The primary structure comprises 91 residues: MTGQPKTRVSVRIYGQDYTIVGAESPAHIRLVAAFVDDKMHEFSEKNPMLDVPKLAVLTAVNIASEYLKLKEEYNRLREQLKKEKDGERDD.

Residues 58-91 (LTAVNIASEYLKLKEEYNRLREQLKKEKDGERDD) adopt a coiled-coil conformation.

This sequence belongs to the ZapA family. Type 2 subfamily. In terms of assembly, homodimer. Interacts with FtsZ.

The protein resides in the cytoplasm. In terms of biological role, activator of cell division through the inhibition of FtsZ GTPase activity, therefore promoting FtsZ assembly into bundles of protofilaments necessary for the formation of the division Z ring. It is recruited early at mid-cell but it is not essential for cell division. This is Cell division protein ZapA from Geobacillus kaustophilus (strain HTA426).